The following is a 183-amino-acid chain: uncharacterized protein (183 aa).

This is an uncharacterized protein from Bacillus subtilis (strain 168).